The following is a 412-amino-acid chain: Putative potassium channel protein RPA4233 (412 aa).

Transmembrane regions (helical) follow at residues 35 to 55 (FIVF…VPAM), 65 to 85 (ALEL…IWIA), 164 to 184 (LMAC…AMHI), 202 to 222 (WWAI…ATGI), and 225 to 245 (MVAS…VGIV). Residues 210 to 215 (TIGYGD) carry the Selectivity filter motif. 270 to 388 (LFSHLTAGDI…RKINQIVEGR (119 aa)) is an a nucleoside 3',5'-cyclic phosphate binding site.

This sequence belongs to the potassium channel family.

The protein localises to the cell membrane. This is Putative potassium channel protein RPA4233 from Rhodopseudomonas palustris (strain ATCC BAA-98 / CGA009).